The sequence spans 307 residues: Ribosomal RNA small subunit methyltransferase A (307 aa).

S-adenosyl-L-methionine contacts are provided by Asn35, Val37, Gly62, Glu83, Asp113, and Asn136.

It belongs to the class I-like SAM-binding methyltransferase superfamily. rRNA adenine N(6)-methyltransferase family. RsmA subfamily.

It localises to the cytoplasm. The catalysed reaction is adenosine(1518)/adenosine(1519) in 16S rRNA + 4 S-adenosyl-L-methionine = N(6)-dimethyladenosine(1518)/N(6)-dimethyladenosine(1519) in 16S rRNA + 4 S-adenosyl-L-homocysteine + 4 H(+). Specifically dimethylates two adjacent adenosines (A1518 and A1519) in the loop of a conserved hairpin near the 3'-end of 16S rRNA in the 30S particle. May play a critical role in biogenesis of 30S subunits. The chain is Ribosomal RNA small subunit methyltransferase A from Bifidobacterium longum subsp. infantis (strain ATCC 15697 / DSM 20088 / JCM 1222 / NCTC 11817 / S12).